The following is a 292-amino-acid chain: MNKRFESIGLVGHPRHPAALATHEMLFHWLTGKGYPVIVERQIARDLKLQHALTGTLADIGQQADLAVVVGGDGNMLGAARILARYDVDVIGVNRGNLGFLTDLDPDNAKQQLSCVLEGEYSRERRFLLEVKVCRDGQMHRRSTAINEVVLHPGKVAHMIEFEVYINDTFAFSQRSDGLIISTPTGSTAYSLSAGGPILAPTLDAIALVPMFPHTLSARPLVIDSNSKIHLRFSHFSNELEISCDSQIALPIQQGEEVIVQRSPFYLSLIHPKDYSYFNTLSSKLGWSKKLF.

The Proton acceptor role is filled by D73. NAD(+)-binding positions include 73–74 (DG), 147–148 (NE), H158, R175, D177, 188–193 (TAYSLS), and Q247.

The protein belongs to the NAD kinase family. It depends on a divalent metal cation as a cofactor.

It is found in the cytoplasm. The enzyme catalyses NAD(+) + ATP = ADP + NADP(+) + H(+). Involved in the regulation of the intracellular balance of NAD and NADP, and is a key enzyme in the biosynthesis of NADP. Catalyzes specifically the phosphorylation on 2'-hydroxyl of the adenosine moiety of NAD to yield NADP. The chain is NAD kinase from Edwardsiella ictaluri (strain 93-146).